The primary structure comprises 171 residues: Peptide deformylase (171 aa).

Fe cation contacts are provided by cysteine 91 and histidine 133. Residue glutamate 134 is part of the active site. Histidine 137 is a Fe cation binding site.

This sequence belongs to the polypeptide deformylase family. Fe(2+) is required as a cofactor.

The catalysed reaction is N-terminal N-formyl-L-methionyl-[peptide] + H2O = N-terminal L-methionyl-[peptide] + formate. In terms of biological role, removes the formyl group from the N-terminal Met of newly synthesized proteins. Requires at least a dipeptide for an efficient rate of reaction. N-terminal L-methionine is a prerequisite for activity but the enzyme has broad specificity at other positions. The polypeptide is Peptide deformylase (Haemophilus ducreyi (strain 35000HP / ATCC 700724)).